Consider the following 774-residue polypeptide: Beta-xylosidase/alpha-L-arabinofuranosidase 2 (774 aa).

Residues 1–33 (MASVENRTPNVSVFLCFFVLFATLLLSGGRVSS) form the signal peptide. N-linked (GlcNAc...) asparagine glycosylation occurs at N136. Residue D303 is part of the active site. The N-linked (GlcNAc...) asparagine glycan is linked to N437.

Belongs to the glycoside hydrolase 3 family.

Its subcellular location is the secreted. The protein localises to the extracellular space. It localises to the extracellular matrix. The catalysed reaction is Hydrolysis of (1-&gt;4)-beta-D-xylans, to remove successive D-xylose residues from the non-reducing termini.. The enzyme catalyses Hydrolysis of terminal non-reducing alpha-L-arabinofuranoside residues in alpha-L-arabinosides.. Its function is as follows. A bifunctional beta-xylosidase/alpha-L-arabinosidase, exo-enzyme that acts synergistically with endohydrolases. Releases xylose and arabinose from cell walls. The polypeptide is Beta-xylosidase/alpha-L-arabinofuranosidase 2 (Medicago sativa subsp. varia (Alfalfa)).